The primary structure comprises 132 residues: MTMTDPIADMLSRVRNANNAHHDTVSMPSSKLKANIAEILKQEGYIESYTVEDAKVGKTLTLELKYTGNRVRSIAGLRRVSKPGLRVYAKSTNLPQVLGGLGVAIISTSQGLLTDRQATEKGVGGEVLAYVW.

This sequence belongs to the universal ribosomal protein uS8 family. Part of the 30S ribosomal subunit. Contacts proteins S5 and S12.

One of the primary rRNA binding proteins, it binds directly to 16S rRNA central domain where it helps coordinate assembly of the platform of the 30S subunit. The chain is Small ribosomal subunit protein uS8 from Corynebacterium efficiens (strain DSM 44549 / YS-314 / AJ 12310 / JCM 11189 / NBRC 100395).